The following is a 315-amino-acid chain: Methionyl-tRNA formyltransferase (315 aa).

113–116 (SLLP) lines the (6S)-5,6,7,8-tetrahydrofolate pocket.

Belongs to the Fmt family.

It carries out the reaction L-methionyl-tRNA(fMet) + (6R)-10-formyltetrahydrofolate = N-formyl-L-methionyl-tRNA(fMet) + (6S)-5,6,7,8-tetrahydrofolate + H(+). In terms of biological role, attaches a formyl group to the free amino group of methionyl-tRNA(fMet). The formyl group appears to play a dual role in the initiator identity of N-formylmethionyl-tRNA by promoting its recognition by IF2 and preventing the misappropriation of this tRNA by the elongation apparatus. The polypeptide is Methionyl-tRNA formyltransferase (Enterobacter sp. (strain 638)).